Reading from the N-terminus, the 501-residue chain is Cytochrome P450 71B25 (501 aa).

Residues 1 to 21 (MAILQSFLLLLSLPFLFTLIY) form a helical membrane-spanning segment. C445 contributes to the heme binding site.

This sequence belongs to the cytochrome P450 family. Heme serves as cofactor.

It is found in the membrane. The protein is Cytochrome P450 71B25 (CYP71B25) of Arabidopsis thaliana (Mouse-ear cress).